A 224-amino-acid polypeptide reads, in one-letter code: Inhibitor of apoptosis protein (224 aa).

A BIR repeat occupies 29–92 (IDARNQSFAI…GFWSRNCGFM (64 aa)). The Zn(2+) site is built by C62, C65, H82, and C89.

Belongs to the asfivirus IAP family. As to quaternary structure, interacts with subunit p17 of host CASP3.

It localises to the host cytoplasm. It is found in the virion. Functionally, prevent apoptosis of host cell by inhibiting caspase-3/CASP3 activation to promote the viral replication. Also induces the activation of host NF-kappaB. The protein is Inhibitor of apoptosis protein (p27) of African swine fever virus (isolate Pig/Haiti/H811/1981) (ASFV).